The chain runs to 1151 residues: ATP-dependent helicase/deoxyribonuclease subunit B (1151 aa).

The UvrD-like helicase ATP-binding domain occupies 1 to 273 (MALRLVLGRA…LALAAGVRVE (273 aa)). Residue 8–15 (GRAGSGKT) coordinates ATP. Residues 282-578 (PPRFREAPAL…KLRLIPPALD (297 aa)) form the UvrD-like helicase C-terminal domain. Positions 788, 1107, 1110, and 1116 each coordinate [4Fe-4S] cluster.

Belongs to the helicase family. AddB/RexB type 1 subfamily. Heterodimer of AddA and AddB. Mg(2+) serves as cofactor. Requires [4Fe-4S] cluster as cofactor.

Its function is as follows. The heterodimer acts as both an ATP-dependent DNA helicase and an ATP-dependent, dual-direction single-stranded exonuclease. Recognizes the chi site generating a DNA molecule suitable for the initiation of homologous recombination. The AddB subunit has 5' -&gt; 3' nuclease activity but not helicase activity. This chain is ATP-dependent helicase/deoxyribonuclease subunit B, found in Moorella thermoacetica (strain ATCC 39073 / JCM 9320).